Here is a 163-residue protein sequence, read N- to C-terminus: Ureidoglycolate lyase 2 (163 aa).

The protein belongs to the ureidoglycolate lyase family. As to quaternary structure, homodimer. Requires Ni(2+) as cofactor.

The catalysed reaction is (S)-ureidoglycolate = urea + glyoxylate. It functions in the pathway nitrogen metabolism; (S)-allantoin degradation. In terms of biological role, catalyzes the catabolism of the allantoin degradation intermediate (S)-ureidoglycolate, generating urea and glyoxylate. Involved in the utilization of allantoin as nitrogen source. In Rhizobium meliloti (strain 1021) (Ensifer meliloti), this protein is Ureidoglycolate lyase 2.